The following is a 1086-amino-acid chain: DNA polymerase (1086 aa).

The interval 638-657 (STTRKPVDDVEEHSECNGFT) is disordered.

It belongs to the DNA polymerase type-B family.

The enzyme catalyses DNA(n) + a 2'-deoxyribonucleoside 5'-triphosphate = DNA(n+1) + diphosphate. In terms of biological role, replicates the viral genome. Host DNA polymerases cannot substitute for the viral enzyme in this process. This chain is DNA polymerase, found in Noctuidae (owlet moths).